Consider the following 181-residue polypeptide: Oligoribonuclease (181 aa).

The 164-residue stretch at 8-171 (LIWIDLEMTG…DDIRESIAEL (164 aa)) folds into the Exonuclease domain. The active site involves Tyr-129.

Belongs to the oligoribonuclease family.

It localises to the cytoplasm. Its function is as follows. 3'-to-5' exoribonuclease specific for small oligoribonucleotides. The chain is Oligoribonuclease from Alcanivorax borkumensis (strain ATCC 700651 / DSM 11573 / NCIMB 13689 / SK2).